Reading from the N-terminus, the 90-residue chain is uncharacterized protein (90 aa).

It is found in the cytoplasm. This is an uncharacterized protein from Saccharomyces cerevisiae (strain ATCC 204508 / S288c) (Baker's yeast).